Here is a 43-residue protein sequence, read N- to C-terminus: MIIKNNNNNNNNNNNNNNNNNNNNNNNNNNNNNNNNNIEIIIK.

Residues Met1–Asn37 are compositionally biased toward low complexity. The disordered stretch occupies residues Met1–Lys43.

This is an uncharacterized protein from Dictyostelium discoideum (Social amoeba).